Here is an 801-residue protein sequence, read N- to C-terminus: Endonuclease MutS2 (801 aa).

336–343 (GPNTGGKT) is an ATP binding site. Residues 696 to 721 (AQQSKAKQKQQKIVKTKTASGSARAT) form a disordered region. A compositionally biased stretch (basic residues) spans 701 to 710 (AKQKQQKIVK). The Smr domain maps to 726–801 (LDLRGVRYEA…GDGATIAELS (76 aa)).

It belongs to the DNA mismatch repair MutS family. MutS2 subfamily. As to quaternary structure, homodimer. Binds to stalled ribosomes, contacting rRNA.

Endonuclease that is involved in the suppression of homologous recombination and thus may have a key role in the control of bacterial genetic diversity. Functionally, acts as a ribosome collision sensor, splitting the ribosome into its 2 subunits. Detects stalled/collided 70S ribosomes which it binds and splits by an ATP-hydrolysis driven conformational change. Acts upstream of the ribosome quality control system (RQC), a ribosome-associated complex that mediates the extraction of incompletely synthesized nascent chains from stalled ribosomes and their subsequent degradation. Probably generates substrates for RQC. The sequence is that of Endonuclease MutS2 from Leuconostoc citreum (strain KM20).